A 325-amino-acid chain; its full sequence is Probable pectate lyase B (325 aa).

The signal sequence occupies residues 1-15 (MRLPTLFMLAAIATA). Ca(2+) contacts are provided by D132, D161, and D165. Residue R218 is part of the active site.

The protein belongs to the polysaccharide lyase 1 family. The cofactor is Ca(2+).

Its subcellular location is the secreted. It catalyses the reaction Eliminative cleavage of (1-&gt;4)-alpha-D-galacturonan to give oligosaccharides with 4-deoxy-alpha-D-galact-4-enuronosyl groups at their non-reducing ends.. Pectinolytic enzyme consist of four classes of enzymes: pectin lyase, polygalacturonase, pectin methylesterase and rhamnogalacturonase. Among pectinolytic enzymes, pectin lyase is the most important in depolymerization of pectin, since it cleaves internal glycosidic bonds of highly methylated pectins. Favors pectate, the anion, over pectin, the methyl ester. The chain is Probable pectate lyase B (plyB) from Aspergillus terreus (strain NIH 2624 / FGSC A1156).